The sequence spans 414 residues: tRNA methyltransferase 10 homolog C (414 aa).

A mitochondrion-targeting transit peptide spans 1–35; the sequence is MNVTVRFLRPFARCLVPYTFHRKRSHLYSGVLQRY. Ser-79 carries the post-translational modification Phosphoserine. Positions 133–171 form a coiled coil; sequence GKEKAKKAKQVKKEMKAEAREEAKRARLLETTAEEQQQD. Positions 186 to 378 constitute an SAM-dependent MTase TRM10-type domain; sequence LGWKGVQAMQ…KFVPRRKHTG (193 aa).

It belongs to the class IV-like SAM-binding methyltransferase superfamily. TRM10 family. In terms of assembly, component of mitochondrial ribonuclease P, a complex composed of TRMT10C/MRPP1, HSD17B10/MRPP2 and PRORP/MRPP3. Interacts with HSD17B10/MRPP2; forming the MRPP1-MRPP2 subcomplex of the mitochondrial ribonuclease P complex. Interacts with GRSF1.

It localises to the mitochondrion matrix. The protein resides in the mitochondrion nucleoid. The catalysed reaction is adenosine(9) in tRNA + S-adenosyl-L-methionine = N(1)-methyladenosine(9) in tRNA + S-adenosyl-L-homocysteine + H(+). It catalyses the reaction guanosine(9) in tRNA + S-adenosyl-L-methionine = N(1)-methylguanosine(9) in tRNA + S-adenosyl-L-homocysteine + H(+). The enzyme catalyses an adenosine in mRNA + S-adenosyl-L-methionine = an N(1)-methyladenosine in mRNA + S-adenosyl-L-homocysteine + H(+). Functionally, mitochondrial tRNA N(1)-methyltransferase involved in mitochondrial tRNA maturation. Component of mitochondrial ribonuclease P, a complex composed of TRMT10C/MRPP1, HSD17B10/MRPP2 and PRORP/MRPP3, which cleaves tRNA molecules in their 5'-ends. Together with HSD17B10/MRPP2, forms a subcomplex of the mitochondrial ribonuclease P, named MRPP1-MRPP2 subcomplex, which displays functions that are independent of the ribonuclease P activity. The MRPP1-MRPP2 subcomplex catalyzes the formation of N(1)-methylguanine and N(1)-methyladenine at position 9 (m1G9 and m1A9, respectively) in tRNAs; TRMT10C/MRPP1 acting as the catalytic N(1)-methyltransferase subunit. The MRPP1-MRPP2 subcomplex also acts as a tRNA maturation platform: following 5'-end cleavage by the mitochondrial ribonuclease P complex, the MRPP1-MRPP2 subcomplex enhances the efficiency of 3'-processing catalyzed by ELAC2, retains the tRNA product after ELAC2 processing and presents the nascent tRNA to the mitochondrial CCA tRNA nucleotidyltransferase TRNT1 enzyme. In addition to tRNA N(1)-methyltransferase activity, TRMT10C/MRPP1 also acts as a mRNA N(1)-methyltransferase by mediating methylation of adenosine residues at the N(1) position of MT-ND5 mRNA. Associates with mitochondrial DNA complexes at the nucleoids to initiate RNA processing and ribosome assembly. The chain is tRNA methyltransferase 10 homolog C from Mus musculus (Mouse).